Here is a 344-residue protein sequence, read N- to C-terminus: Aspartate-semialdehyde dehydrogenase (344 aa).

NADP(+) is bound by residues 10–13 (TGQV) and 38–39 (RS). Arg-101 provides a ligand contact to phosphate. The active-site Acyl-thioester intermediate is Cys-131. Gln-158 is a binding site for substrate. 161–162 (SG) is an NADP(+) binding site. Lys-228 contributes to the phosphate binding site. Position 250 (Arg-250) interacts with substrate. The Proton acceptor role is filled by His-257. Asn-326 contacts NADP(+).

It belongs to the aspartate-semialdehyde dehydrogenase family. As to quaternary structure, homodimer.

It catalyses the reaction L-aspartate 4-semialdehyde + phosphate + NADP(+) = 4-phospho-L-aspartate + NADPH + H(+). It functions in the pathway amino-acid biosynthesis; L-lysine biosynthesis via DAP pathway; (S)-tetrahydrodipicolinate from L-aspartate: step 2/4. Its pathway is amino-acid biosynthesis; L-methionine biosynthesis via de novo pathway; L-homoserine from L-aspartate: step 2/3. The protein operates within amino-acid biosynthesis; L-threonine biosynthesis; L-threonine from L-aspartate: step 2/5. Catalyzes the NADPH-dependent formation of L-aspartate-semialdehyde (L-ASA) by the reductive dephosphorylation of L-aspartyl-4-phosphate. This Corynebacterium glutamicum (strain ATCC 13032 / DSM 20300 / JCM 1318 / BCRC 11384 / CCUG 27702 / LMG 3730 / NBRC 12168 / NCIMB 10025 / NRRL B-2784 / 534) protein is Aspartate-semialdehyde dehydrogenase.